Here is a 193-residue protein sequence, read N- to C-terminus: Rho-related GTP-binding protein RhoA-C (193 aa).

Residues 12–19, 30–37, 59–63, 117–120, and 160–162 each bind GTP; these read GDGACGKT, FPEVYVPT, DTAGQ, NKKD, and SAK. The (Microbial infection) O-linked (GlcNAc) tyrosine; by Yersinia Afp18 glycan is linked to Tyr34. Cys190 is subject to Cysteine methyl ester. Cys190 carries S-geranylgeranyl cysteine lipidation. Residues 191–193 constitute a propeptide, removed in mature form; that stretch reads LLL.

The protein belongs to the small GTPase superfamily. Rho family. (Microbial infection) Glycosylated at Tyr-34 by Yersinia ruckeri toxin Afp18. Mono-O-GlcNAcylation by Afp18 inhibits RhoA activation by guanine nucleotide exchange factors and blocks RhoA signaling.

It is found in the cell membrane. In terms of biological role, regulates a signal transduction pathway linking plasma membrane receptors to the assembly of focal adhesions and actin stress fibers. This is Rho-related GTP-binding protein RhoA-C from Danio rerio (Zebrafish).